Consider the following 353-residue polypeptide: ATPase GET3 (353 aa).

ATP is bound at residue 26-33 (KGGVGKTT). Residue Asp57 is part of the active site. ATP contacts are provided by Glu244 and Asn271. The Zn(2+) site is built by Cys284 and Cys287.

This sequence belongs to the arsA ATPase family. In terms of assembly, homodimer. Component of the Golgi to ER traffic (GET) complex, which is composed of GET1, GET2 and GET3. Within the complex, GET1 and GET2 form a heterotetramer which is stabilized by phosphatidylinositol binding and which binds to the GET3 homodimer. Interacts with the chloride channel protein GEF1.

Its subcellular location is the cytoplasm. It localises to the endoplasmic reticulum. It is found in the golgi apparatus. Functionally, ATPase required for the post-translational delivery of tail-anchored (TA) proteins to the endoplasmic reticulum. Recognizes and selectively binds the transmembrane domain of TA proteins in the cytosol. This complex then targets to the endoplasmic reticulum by membrane-bound receptors GET1 and GET2, where the tail-anchored protein is released for insertion. This process is regulated by ATP binding and hydrolysis. ATP binding drives the homodimer towards the closed dimer state, facilitating recognition of newly synthesized TA membrane proteins. ATP hydrolysis is required for insertion. Subsequently, the homodimer reverts towards the open dimer state, lowering its affinity for the GET1-GET2 receptor, and returning it to the cytosol to initiate a new round of targeting. Cooperates with the HDEL receptor ERD2 to mediate the ATP-dependent retrieval of resident ER proteins that contain a C-terminal H-D-E-L retention signal from the Golgi to the ER. Involved in low-level resistance to the oxyanions arsenite and arsenate, and in heat tolerance. The sequence is that of ATPase GET3 from Zygosaccharomyces rouxii (strain ATCC 2623 / CBS 732 / NBRC 1130 / NCYC 568 / NRRL Y-229).